The primary structure comprises 299 residues: Ribonuclease Z (299 aa).

H60, H62, D64, H65, H137, D207, and H265 together coordinate Zn(2+). D64 functions as the Proton acceptor in the catalytic mechanism.

This sequence belongs to the RNase Z family. As to quaternary structure, homodimer. Zn(2+) is required as a cofactor.

The catalysed reaction is Endonucleolytic cleavage of RNA, removing extra 3' nucleotides from tRNA precursor, generating 3' termini of tRNAs. A 3'-hydroxy group is left at the tRNA terminus and a 5'-phosphoryl group is left at the trailer molecule.. Its function is as follows. Zinc phosphodiesterase, which displays some tRNA 3'-processing endonuclease activity. Probably involved in tRNA maturation, by removing a 3'-trailer from precursor tRNA. The polypeptide is Ribonuclease Z (Nitrosopumilus maritimus (strain SCM1)).